The primary structure comprises 88 residues: UPF0237 protein spr0217 (88 aa).

The ACT domain occupies Ile4–Gln77.

It belongs to the UPF0237 family. In terms of assembly, homodimer.

This chain is UPF0237 protein spr0217, found in Streptococcus pneumoniae (strain ATCC BAA-255 / R6).